A 944-amino-acid polypeptide reads, in one-letter code: Breast cancer type 2 susceptibility protein homolog (944 aa).

Basic and acidic residues-rich tracts occupy residues Lys-325–Ile-348 and Asn-415–Asn-431. Disordered stretches follow at residues Lys-325–Asp-354 and Asn-415–Gln-440. 3 BRCA2 repeats span residues Ala-543–Ser-577, Asn-644–Ala-678, and Ser-719–Ala-753. Disordered regions lie at residues Leu-823–Ala-854 and Ser-876–Tyr-944. Composition is skewed to polar residues over residues Ile-838–Asp-852 and Ser-876–Ala-885. Residues Ala-904–Ala-921 are compositionally biased toward basic and acidic residues. The span at Lys-932–Tyr-944 shows a compositional bias: basic residues.

In terms of assembly, interacts with Rad9 and spn-A/Rad51.

It localises to the nucleus. In terms of biological role, involved in and required for double-strand break repair by meiotic and mitotic homologous recombination. During meiosis, has a dual role in the repair of meiotic double-stranded breaks and the efficient activation of the meiotic recombination checkpoint. The chain is Breast cancer type 2 susceptibility protein homolog from Drosophila simulans (Fruit fly).